Consider the following 991-residue polypeptide: uncharacterized protein (991 aa).

The N-terminal stretch at 1-17 (MLWPAALVAMFALAARA) is a signal peptide. Disordered stretches follow at residues 332-352 (DPLP…GETT), 392-425 (TTED…TTEG), 469-511 (EDST…EDTT), 542-569 (DTEA…TTPV), 587-641 (PAPT…NSLS), and 658-734 (ASSG…PPRI). Residues 400–413 (TSTPTVTTVIDPTS) show a composition bias toward low complexity. Residues 414-425 (GAVTTESRTTEG) show a composition bias toward polar residues. The span at 472–493 (TTTARAAEYPTPTTTTVEPRPA) shows a compositional bias: low complexity. Positions 542-554 (DTEAAQSATSISD) are enriched in polar residues. Composition is skewed to low complexity over residues 556–569 (VTPE…TTPV) and 598–615 (ASTT…SHTP). 2 stretches are compositionally biased toward polar residues: residues 617-628 (PQESTSTPSRAP) and 658-667 (ASSGPGASTG). Low complexity predominate over residues 668-682 (ATTAPISPPWSASPA). Residues 686-710 (VTTSAARTLEPSSTRKAVAAESTTA) show a composition bias toward polar residues.

This is an uncharacterized protein from Psittacid herpesvirus 1 (isolate Amazon parrot/-/97-0001/1997) (PsHV-1).